We begin with the raw amino-acid sequence, 439 residues long: UPF0597 protein Dalk_4447 (439 aa).

This sequence belongs to the UPF0597 family.

In Desulfatibacillum aliphaticivorans, this protein is UPF0597 protein Dalk_4447.